The chain runs to 187 residues: Prepilin peptidase-dependent protein B (187 aa).

Positions 1–7 (MPVKEQG) are cleaved as a propeptide — leader sequence. Phenylalanine 8 is subject to N-methylphenylalanine. A helical transmembrane segment spans residues 8 to 28 (FSLLEVLIAMAISSVLLLGAA).

It is found in the membrane. In terms of biological role, not yet known. This chain is Prepilin peptidase-dependent protein B (ppdB), found in Escherichia coli (strain K12).